Here is a 420-residue protein sequence, read N- to C-terminus: Napsin-A (420 aa).

Residues 1-25 form the signal peptide; it reads MSPPPLLQPLLLLLPLLNVEPSGAT. Positions 26-63 are cleaved as a propeptide — activation peptide; that stretch reads LIRIPLHRVQPGRRILNLLRGWREPAELPKLGAPSPGD. The region spanning 78-399 is the Peptidase A1 domain; that stretch reads YFGEIGLGTP…MKSSARVGLA (322 aa). A glycan (N-linked (GlcNAc...) asparagine) is linked at N90. D96 is a catalytic residue. A disulfide bridge links C109 with C116. N133 is a glycosylation site (N-linked (GlcNAc...) asparagine). C274 and C278 form a disulfide bridge. D283 is a catalytic residue. C317 and C354 are disulfide-bonded. N-linked (GlcNAc...) asparagine glycosylation occurs at N336.

The protein belongs to the peptidase A1 family. In terms of tissue distribution, expressed predominantly in adult lung (type II pneumocytes) and kidney and in fetal lung. Low levels in adult spleen and very low levels in peripheral blood leukocytes.

It is found in the secreted. Functionally, may be involved in processing of pneumocyte surfactant precursors. In Homo sapiens (Human), this protein is Napsin-A (NAPSA).